The following is a 396-amino-acid chain: Phosphoglycerate kinase (396 aa).

Residues 21–23, Arg36, 59–62, Arg113, and Arg146 contribute to the substrate site; these read DLN and HLGR. ATP-binding positions include Lys197, Glu319, and 345 to 348; that span reads GGDT.

This sequence belongs to the phosphoglycerate kinase family. As to quaternary structure, monomer.

It localises to the cytoplasm. It carries out the reaction (2R)-3-phosphoglycerate + ATP = (2R)-3-phospho-glyceroyl phosphate + ADP. The protein operates within carbohydrate degradation; glycolysis; pyruvate from D-glyceraldehyde 3-phosphate: step 2/5. This chain is Phosphoglycerate kinase, found in Legionella pneumophila (strain Paris).